Here is a 512-residue protein sequence, read N- to C-terminus: Cytochrome P450 monooxygenase ABA1 (512 aa).

A helical membrane pass occupies residues H13 to I32. Residue C458 coordinates heme.

The protein belongs to the cytochrome P450 family. Heme serves as cofactor.

Its subcellular location is the membrane. The protein operates within hormone biosynthesis. In terms of biological role, cytochrome P450 monooxygenase involved in the biosynthesis of abscisic acid (ABA), a phytohormone that acts antagonistically toward salicylic acid (SA), jasmonic acid (JA) and ethylene (ETH) signaling, to impede plant defense responses. During pathogen-host interaction, ABA plays a dual role in disease severity by increasing plant susceptibility and accelerating pathogenesis in the fungus itself. The first step of the pathway catalyzes the reaction from farnesyl diphosphate to alpha-ionylideneethane performed by the alpha-ionylideneethane synthase ABA3 via a three-step reaction mechanism involving 2 neutral intermediates, beta-farnesene and allofarnesene. The cytochrome P450 monooxygenase ABA1 might then be involved in the conversion of alpha-ionylideneethane to alpha-ionylideneacetic acid. Alpha-ionylideneacetic acid is further converted to abscisic acid in 2 steps involving the cytochrome P450 monooxygenase ABA2 and the short-chain dehydrogenase/reductase ABA4, via the intermediates 1'-deoxy-ABA or 1',4'-trans-diol-ABA, depending on the order of action of these 2 enzymes. ABA2 is responsible for the hydroxylation of carbon atom C-1' and ABA4 might be involved in the oxidation of the C-4' carbon atom. This is Cytochrome P450 monooxygenase ABA1 from Pyricularia oryzae (strain Y34) (Rice blast fungus).